We begin with the raw amino-acid sequence, 108 residues long: Class I hydrophobin 3 (108 aa).

Positions 1–17 (MFFQTTIVAALAFLAVA) are cleaved as a signal peptide. 4 disulfide bridges follow: C28–C87, C35–C81, C36–C69, and C88–C101. N37 carries an N-linked (GlcNAc...) asparagine glycan.

This sequence belongs to the fungal hydrophobin family. As to quaternary structure, self-assembles to form functional amyloid fibrils called rodlets. Self-assembly into fibrillar rodlets occurs spontaneously at hydrophobic:hydrophilic interfaces and the rodlets further associate laterally to form amphipathic monolayers.

Its subcellular location is the secreted. It is found in the cell wall. Functionally, aerial growth, conidiation, and dispersal of filamentous fungi in the environment rely upon a capability of their secreting small amphipathic proteins called hydrophobins (HPBs) with low sequence identity. Class I can self-assemble into an outermost layer of rodlet bundles on aerial cell surfaces, conferring cellular hydrophobicity that supports fungal growth, development and dispersal; whereas Class II form highly ordered films at water-air interfaces through intermolecular interactions but contribute nothing to the rodlet structure. Vmh3 is a class I hydrophobin that is essential for the maintenance of the surface hydrophobicity of the mycelium and might be involved in the development of fruiting bodies. Plays an important role in hyphal resistance against environmental stress. Necessary for the efficient biodegradation of lignin. The polypeptide is Class I hydrophobin 3 (Pleurotus ostreatus (Oyster mushroom)).